The sequence spans 438 residues: Ribosomal protein uS12 methylthiotransferase RimO (438 aa).

Positions 5 to 115 constitute an MTTase N-terminal domain; sequence PRVGFVSLGC…VMSAVHTHLP (111 aa). Cys-14, Cys-50, Cys-79, Cys-146, Cys-150, and Cys-153 together coordinate [4Fe-4S] cluster. Residues 132–369 enclose the Radical SAM core domain; it reads LTPKHYAYLK…MAVQAEISAR (238 aa). The 67-residue stretch at 372 to 438 folds into the TRAM domain; that stretch reads ERRVGQTLQV…SEHDLWGERR (67 aa).

This sequence belongs to the methylthiotransferase family. RimO subfamily. It depends on [4Fe-4S] cluster as a cofactor.

Its subcellular location is the cytoplasm. The enzyme catalyses L-aspartate(89)-[ribosomal protein uS12]-hydrogen + (sulfur carrier)-SH + AH2 + 2 S-adenosyl-L-methionine = 3-methylsulfanyl-L-aspartate(89)-[ribosomal protein uS12]-hydrogen + (sulfur carrier)-H + 5'-deoxyadenosine + L-methionine + A + S-adenosyl-L-homocysteine + 2 H(+). Catalyzes the methylthiolation of an aspartic acid residue of ribosomal protein uS12. The chain is Ribosomal protein uS12 methylthiotransferase RimO from Chromobacterium violaceum (strain ATCC 12472 / DSM 30191 / JCM 1249 / CCUG 213 / NBRC 12614 / NCIMB 9131 / NCTC 9757 / MK).